The following is a 487-amino-acid chain: Berbamunine synthase (487 aa).

Residue Cys-429 coordinates heme.

Belongs to the cytochrome P450 family. The cofactor is heme.

The protein localises to the endoplasmic reticulum membrane. It is found in the microsome membrane. It catalyses the reaction (R)-N-methylcoclaurine + (S)-N-methylcoclaurine + reduced [NADPH--hemoprotein reductase] + O2 = berbamunine + oxidized [NADPH--hemoprotein reductase] + 2 H2O + H(+). It functions in the pathway alkaloid biosynthesis; berbamunine biosynthesis; berbamunine from (R)-N-methylcoclaurine and (S)-N-methylcoclaurine: step 1/1. Its function is as follows. Forms the bisbenzylisoquinoline alkaloid berbamunine by phenol oxidation of N-methylcoclaurine without the incorporation of oxygen into the product. Oxidatively couples either two molecules of (R)-N-methylcoclaurine to form the (R,R) dimer guattegaumerine or one molecule each of (R)- and (S)-N-methylcoclaurine to form the (R,S) dimer berbamunine. The sequence is that of Berbamunine synthase (CYP80A1) from Berberis stolonifera (Barberry).